The chain runs to 154 residues: Myoglobin (154 aa).

The Globin domain occupies 2–148 (GLSDGEWQLV…FRNDIAAKYK (147 aa)). Position 4 is a phosphoserine (serine 4). Histidine 65 contacts nitrite. O2 is bound at residue histidine 65. A Phosphothreonine modification is found at threonine 68. Heme b is bound at residue histidine 94.

It belongs to the globin family. As to quaternary structure, monomeric.

It localises to the cytoplasm. It is found in the sarcoplasm. The enzyme catalyses Fe(III)-heme b-[protein] + nitric oxide + H2O = Fe(II)-heme b-[protein] + nitrite + 2 H(+). It carries out the reaction H2O2 + AH2 = A + 2 H2O. Its function is as follows. Monomeric heme protein which primary function is to store oxygen and facilitate its diffusion within muscle tissues. Reversibly binds oxygen through a pentacoordinated heme iron and enables its timely and efficient release as needed during periods of heightened demand. Depending on the oxidative conditions of tissues and cells, and in addition to its ability to bind oxygen, it also has a nitrite reductase activity whereby it regulates the production of bioactive nitric oxide. Under stress conditions, like hypoxia and anoxia, it also protects cells against reactive oxygen species thanks to its pseudoperoxidase activity. This chain is Myoglobin (MB), found in Meles meles (Eurasian badger).